A 476-amino-acid chain; its full sequence is Sulfate adenylyltransferase subunit 1 (476 aa).

The tr-type G domain maps to K24–L228. The tract at residues G33–S40 is G1. G33–S40 is a binding site for GTP. The G2 stretch occupies residues G91 to D95. Residues D112–G115 form a G3 region. GTP-binding positions include D112–H116 and N167–D170. A G4 region spans residues N167–D170. Positions S205–L207 are G5.

Belongs to the TRAFAC class translation factor GTPase superfamily. Classic translation factor GTPase family. CysN/NodQ subfamily. As to quaternary structure, heterodimer composed of CysD, the smaller subunit, and CysN.

It catalyses the reaction sulfate + ATP + H(+) = adenosine 5'-phosphosulfate + diphosphate. Its pathway is sulfur metabolism; hydrogen sulfide biosynthesis; sulfite from sulfate: step 1/3. Functionally, with CysD forms the ATP sulfurylase (ATPS) that catalyzes the adenylation of sulfate producing adenosine 5'-phosphosulfate (APS) and diphosphate, the first enzymatic step in sulfur assimilation pathway. APS synthesis involves the formation of a high-energy phosphoric-sulfuric acid anhydride bond driven by GTP hydrolysis by CysN coupled to ATP hydrolysis by CysD. The polypeptide is Sulfate adenylyltransferase subunit 1 (Vibrio vulnificus (strain CMCP6)).